Here is a 271-residue protein sequence, read N- to C-terminus: MSNSPIQAVIFDWAGTIVDFGSFAPTSIFVEAFKQGFDFEIDLEEAREPMGLGKWDHIQAVGRIPAVDKRWNEKFGRSMTSEDIDAIYAAFMPLQKAKVADHADPILNAIEVVNGLKDKGIKIGSCSGYPREVMDVLIPVAADYGYKPDYVVATDDLPQGGRPAPFMALKNVIELNVTDVNACIKVDDAAPGIDEGHNAGMWTVGLLLSGNEAGLTFEEYQAADEATLNAAREKARAKLLKSSPHYLIDTIADFPEVVADIERRLAAGERP.

Asp12 functions as the Nucleophile in the catalytic mechanism. Mg(2+)-binding residues include Asp12 and Ala14. Residue Lys54 is the Schiff-base intermediate with substrate of the active site. Asp188 contacts Mg(2+).

It belongs to the HAD-like hydrolase superfamily. PhnX family. As to quaternary structure, homodimer. Mg(2+) is required as a cofactor.

It catalyses the reaction phosphonoacetaldehyde + H2O = acetaldehyde + phosphate + H(+). Functionally, involved in phosphonate degradation. This is Phosphonoacetaldehyde hydrolase from Vibrio campbellii (strain ATCC BAA-1116).